The sequence spans 192 residues: Molybdenum cofactor guanylyltransferase (192 aa).

GTP contacts are provided by Lys-21, Asp-67, and Asp-101. Asp-101 lines the Mg(2+) pocket.

This sequence belongs to the MobA family. In terms of assembly, monomer. Mg(2+) is required as a cofactor.

It localises to the cytoplasm. It catalyses the reaction Mo-molybdopterin + GTP + H(+) = Mo-molybdopterin guanine dinucleotide + diphosphate. Transfers a GMP moiety from GTP to Mo-molybdopterin (Mo-MPT) cofactor (Moco or molybdenum cofactor) to form Mo-molybdopterin guanine dinucleotide (Mo-MGD) cofactor. This chain is Molybdenum cofactor guanylyltransferase, found in Neisseria meningitidis serogroup C / serotype 2a (strain ATCC 700532 / DSM 15464 / FAM18).